A 195-amino-acid chain; its full sequence is NADH-quinone oxidoreductase subunit B (195 aa).

4 residues coordinate [4Fe-4S] cluster: C74, C75, C139, and C169.

This sequence belongs to the complex I 20 kDa subunit family. In terms of assembly, NDH-1 is composed of 14 different subunits. Subunits NuoB, C, D, E, F, and G constitute the peripheral sector of the complex. [4Fe-4S] cluster serves as cofactor.

It localises to the cell inner membrane. It catalyses the reaction a quinone + NADH + 5 H(+)(in) = a quinol + NAD(+) + 4 H(+)(out). Its function is as follows. NDH-1 shuttles electrons from NADH, via FMN and iron-sulfur (Fe-S) centers, to quinones in the respiratory chain. The immediate electron acceptor for the enzyme in this species is believed to be ubiquinone. Couples the redox reaction to proton translocation (for every two electrons transferred, four hydrogen ions are translocated across the cytoplasmic membrane), and thus conserves the redox energy in a proton gradient. This chain is NADH-quinone oxidoreductase subunit B, found in Methylorubrum populi (strain ATCC BAA-705 / NCIMB 13946 / BJ001) (Methylobacterium populi).